We begin with the raw amino-acid sequence, 877 residues long: Putative leucine-rich repeat receptor-like serine/threonine-protein kinase At2g19230 (877 aa).

Positions Met1–Ala24 are cleaved as a signal peptide. Residues Gln25 to Tyr517 are Extracellular-facing. N-linked (GlcNAc...) asparagine glycans are attached at residues Asn142, Asn233, Asn261, Asn295, Asn405, and Asn420. 2 LRR repeats span residues Pro439–Pro462 and Asp463–Glu484. The chain crosses the membrane as a helical span at residues Ile518–Phe538. Over Trp539–Arg877 the chain is Cytoplasmic. One can recognise a Protein kinase domain in the interval Asn569–Leu842. ATP-binding positions include Leu575–Val583 and Lys596. At Tyr641 the chain carries Phosphotyrosine. Asp692 (proton acceptor) is an active-site residue. Ser726 is modified (phosphoserine). Residues Thr727 and Thr732 each carry the phosphothreonine modification.

This sequence belongs to the protein kinase superfamily. Ser/Thr protein kinase family.

The protein resides in the cell membrane. It carries out the reaction L-seryl-[protein] + ATP = O-phospho-L-seryl-[protein] + ADP + H(+). It catalyses the reaction L-threonyl-[protein] + ATP = O-phospho-L-threonyl-[protein] + ADP + H(+). This is Putative leucine-rich repeat receptor-like serine/threonine-protein kinase At2g19230 from Arabidopsis thaliana (Mouse-ear cress).